Here is a 342-residue protein sequence, read N- to C-terminus: Dihydroorotase (342 aa).

Residues histidine 13 and histidine 15 each contribute to the Zn(2+) site. Residues 15-17 (HLR) and asparagine 41 each bind substrate. Residues lysine 98, histidine 135, and histidine 173 each coordinate Zn(2+). Position 98 is an N6-carboxylysine (lysine 98). Histidine 135 contributes to the substrate binding site. A substrate-binding site is contributed by leucine 218. Aspartate 246 contributes to the Zn(2+) binding site. The active site involves aspartate 246. 2 residues coordinate substrate: histidine 250 and alanine 262.

The protein belongs to the metallo-dependent hydrolases superfamily. DHOase family. Class II DHOase subfamily. In terms of assembly, homodimer. Zn(2+) is required as a cofactor.

It carries out the reaction (S)-dihydroorotate + H2O = N-carbamoyl-L-aspartate + H(+). Its pathway is pyrimidine metabolism; UMP biosynthesis via de novo pathway; (S)-dihydroorotate from bicarbonate: step 3/3. Functionally, catalyzes the reversible cyclization of carbamoyl aspartate to dihydroorotate. The protein is Dihydroorotase of Vibrio cholerae serotype O1 (strain ATCC 39315 / El Tor Inaba N16961).